Consider the following 545-residue polypeptide: Chaperonin GroEL (545 aa).

ATP contacts are provided by residues 30–33, lysine 51, 87–91, glycine 415, 479–481, and aspartate 495; these read TLGP, DGTTT, and NAA. Positions 526 to 545 are disordered; that stretch reads KEDKPDLGGAGGMGGMGGMM. Over residues 533-545 the composition is skewed to gly residues; the sequence is GGAGGMGGMGGMM.

This sequence belongs to the chaperonin (HSP60) family. In terms of assembly, forms a cylinder of 14 subunits composed of two heptameric rings stacked back-to-back. Interacts with the co-chaperonin GroES.

The protein localises to the cytoplasm. The catalysed reaction is ATP + H2O + a folded polypeptide = ADP + phosphate + an unfolded polypeptide.. Functionally, together with its co-chaperonin GroES, plays an essential role in assisting protein folding. The GroEL-GroES system forms a nano-cage that allows encapsulation of the non-native substrate proteins and provides a physical environment optimized to promote and accelerate protein folding. This Sodalis glossinidius protein is Chaperonin GroEL.